Consider the following 239-residue polypeptide: Probable 2-phosphosulfolactate phosphatase (239 aa).

The protein belongs to the ComB family. It depends on Mg(2+) as a cofactor.

The enzyme catalyses (2R)-O-phospho-3-sulfolactate + H2O = (2R)-3-sulfolactate + phosphate. The sequence is that of Probable 2-phosphosulfolactate phosphatase from Clostridium botulinum (strain Langeland / NCTC 10281 / Type F).